The sequence spans 603 residues: MPRFITELKRTHSCGELTKADIGKEVVLFGWVNNRRDHGGAVFIDLRDRAGLTQVVFEEDVRPDVHELAGQLRLEYCVGVRGKVVSRGGNVNPKLRTGEIEVHASDLEIFNRSEPAPFQIEDEIDTGEEKRLQYRYLDLRRAPLQRTLMTRAKVNHLTRNYFTDKGFLELETPFMVKYTPGGARNFLVPSRLNPGKFYALAESPQLFKQLYMMAGFDRYFQIVRCFRDEDLRLDRQPEFTQIDVEMSFVEQNDVFDVMEGLVVKLWKEVLGIEIPRPFQRMPFEESMAKYGNDKPDLRFDMPHVVLTDLVRQHDGGGVPLMHEAVKAKGIVKAMRVPASANFSRTEIDKLEEYVKGMGAKGLARAKVGEGGEWTQSPLAKTITPALRQAINEACEAKPGDLLLFQFGKESVVHTVMANLRVHLAKRMGLIPEYGSGGAWRFLWVVNPPLFEYDEESGQWAAAHHAFTRPHDSDLQFLESDPGKVNCYRYDLVLNGFEIGGGSIRLHDPEVQARVFKAMGITDEEARSKFGFLLDALKMGAPPHGGIALGMDRLVMLLTGAESLRDVVAWPKTQKGTDLMTGAPGDVDARQLRELYVKSTYEPK.

The segment at 205 to 208 (QLFK) is aspartate. Residue Arg-227 coordinates L-aspartate. ATP-binding positions include 227–229 (RDE) and Gln-236. An L-aspartate-binding site is contributed by His-463. Glu-497 lines the ATP pocket. L-aspartate is bound at residue Arg-504. Residue 549-552 (GMDR) participates in ATP binding.

It belongs to the class-II aminoacyl-tRNA synthetase family. Type 1 subfamily. In terms of assembly, homodimer.

The protein resides in the cytoplasm. The enzyme catalyses tRNA(Asx) + L-aspartate + ATP = L-aspartyl-tRNA(Asx) + AMP + diphosphate. Its function is as follows. Aspartyl-tRNA synthetase with relaxed tRNA specificity since it is able to aspartylate not only its cognate tRNA(Asp) but also tRNA(Asn). Reaction proceeds in two steps: L-aspartate is first activated by ATP to form Asp-AMP and then transferred to the acceptor end of tRNA(Asp/Asn). In Anaeromyxobacter dehalogenans (strain 2CP-1 / ATCC BAA-258), this protein is Aspartate--tRNA(Asp/Asn) ligase.